The chain runs to 541 residues: Chaperonin GroEL 2 (541 aa).

Residues 29–32, 86–90, Gly413, 476–478, and Asp492 each bind ATP; these read TLGP, DGTTT, and NAA.

This sequence belongs to the chaperonin (HSP60) family. In terms of assembly, forms a cylinder of 14 subunits composed of two heptameric rings stacked back-to-back. Interacts with the co-chaperonin GroES.

It is found in the cytoplasm. The enzyme catalyses ATP + H2O + a folded polypeptide = ADP + phosphate + an unfolded polypeptide.. Functionally, together with its co-chaperonin GroES, plays an essential role in assisting protein folding. The GroEL-GroES system forms a nano-cage that allows encapsulation of the non-native substrate proteins and provides a physical environment optimized to promote and accelerate protein folding. The chain is Chaperonin GroEL 2 from Streptomyces coelicolor (strain ATCC BAA-471 / A3(2) / M145).